The primary structure comprises 270 residues: Oxidoreductase NAD-binding domain-containing protein 1 (270 aa).

The 104-residue stretch at 20–123 (MELFSARVCD…VGGNFYFDPQ (104 aa)) folds into the FAD-binding FR-type domain. 137–142 (GVGINP) provides a ligand contact to NAD(+).

This Danio rerio (Zebrafish) protein is Oxidoreductase NAD-binding domain-containing protein 1 (oxnad1).